The chain runs to 898 residues: Protein translocase subunit SecA (898 aa).

ATP contacts are provided by residues glutamine 87, 105–109 (GEGKT), and aspartate 512. Residues 855 to 865 (MQYQNNEGTSS) show a composition bias toward polar residues. The segment at 855–898 (MQYQNNEGTSSLHEKSEHKIGRNESCPCGSGKKYKHCHGSKAKY) is disordered. Residues 866-876 (LHEKSEHKIGR) are compositionally biased toward basic and acidic residues. 4 residues coordinate Zn(2+): cysteine 880, cysteine 882, cysteine 891, and histidine 892. The span at 886-898 (KKYKHCHGSKAKY) shows a compositional bias: basic residues.

The protein belongs to the SecA family. Monomer and homodimer. Part of the essential Sec protein translocation apparatus which comprises SecA, SecYEG and auxiliary proteins SecDF-YajC and YidC. Requires Zn(2+) as cofactor.

It localises to the cell inner membrane. The protein resides in the cytoplasm. It carries out the reaction ATP + H2O + cellular proteinSide 1 = ADP + phosphate + cellular proteinSide 2.. Its function is as follows. Part of the Sec protein translocase complex. Interacts with the SecYEG preprotein conducting channel. Has a central role in coupling the hydrolysis of ATP to the transfer of proteins into and across the cell membrane, serving both as a receptor for the preprotein-SecB complex and as an ATP-driven molecular motor driving the stepwise translocation of polypeptide chains across the membrane. The polypeptide is Protein translocase subunit SecA (Histophilus somni (strain 2336) (Haemophilus somnus)).